We begin with the raw amino-acid sequence, 109 residues long: MNTIIPLLLLSLLITVYAYALEDGNKEEIQDIAESEFEASNEMLQLAHLLEADRAETEEDRNSRQKRCWGANVPCEDENSPCCSPLKCEKTFGYGWWYGSPFCVRSGSG.

A signal peptide spans 1-18 (MNTIIPLLLLSLLITVYA). A propeptide spanning residues 19–67 (YALEDGNKEEIQDIAESEFEASNEMLQLAHLLEADRAETEEDRNSRQKR) is cleaved from the precursor. 3 disulfides stabilise this stretch: Cys-68-Cys-83, Cys-75-Cys-88, and Cys-82-Cys-103.

It belongs to the neurotoxin 14 (magi-1) family. 07 (Jztx-56) subfamily. Expressed by the venom gland.

The protein localises to the secreted. Its function is as follows. Probable ion channel inhibitor. In Chilobrachys guangxiensis (Chinese earth tiger tarantula), this protein is U26-theraphotoxin-Cg1a.